The following is a 145-amino-acid chain: Deoxyuridine 5'-triphosphate nucleotidohydrolase (145 aa).

Substrate contacts are provided by residues 65–67 (RSG), Asn78, and 82–84 (TID).

Belongs to the dUTPase family. It depends on Mg(2+) as a cofactor.

It carries out the reaction dUTP + H2O = dUMP + diphosphate + H(+). It functions in the pathway pyrimidine metabolism; dUMP biosynthesis; dUMP from dCTP (dUTP route): step 2/2. Its function is as follows. This enzyme is involved in nucleotide metabolism: it produces dUMP, the immediate precursor of thymidine nucleotides and it decreases the intracellular concentration of dUTP so that uracil cannot be incorporated into DNA. In Clostridium tetani (strain Massachusetts / E88), this protein is Deoxyuridine 5'-triphosphate nucleotidohydrolase.